Here is a 283-residue protein sequence, read N- to C-terminus: MAEITASLVKELRDRTGAGMMECKKALVEANGDIELAIDNMRKSGQAKAAKKAGRVAAEGVILARVENGFGVLVEMNCETDFVAKDAGFLGLANEVTDFAAANKGTTIEALQAQFEEKRAALVAKIGENMNIRRVAYLDGQVIAQYLHGAKIGVLVAGEGSADELKKVAMHVAASKPEFVNPEDVSAEVVEHERQIQIDIAINSGKPKEIAEKMVEGRMKKFTGEVSLTGQAFVMDPSVSVGDFLKSVNTSVSNFIRLEVGEGIEKKEEDFAAEVAKITGGNA.

The interval 80-83 (TDFV) is involved in Mg(2+) ion dislocation from EF-Tu.

It belongs to the EF-Ts family.

The protein resides in the cytoplasm. Associates with the EF-Tu.GDP complex and induces the exchange of GDP to GTP. It remains bound to the aminoacyl-tRNA.EF-Tu.GTP complex up to the GTP hydrolysis stage on the ribosome. The polypeptide is Elongation factor Ts (Haemophilus influenzae (strain PittEE)).